A 156-amino-acid chain; its full sequence is Small ribosomal subunit protein uS7 (156 aa).

It belongs to the universal ribosomal protein uS7 family. In terms of assembly, part of the 30S ribosomal subunit. Contacts proteins S9 and S11.

In terms of biological role, one of the primary rRNA binding proteins, it binds directly to 16S rRNA where it nucleates assembly of the head domain of the 30S subunit. Is located at the subunit interface close to the decoding center, probably blocks exit of the E-site tRNA. The protein is Small ribosomal subunit protein uS7 of Synechococcus elongatus (strain ATCC 33912 / PCC 7942 / FACHB-805) (Anacystis nidulans R2).